The following is an 843-amino-acid chain: Toll-like receptor 4 (843 aa).

Residues 1-23 (MMPPTRLAGTLIPAMAFLSCLRP) form the signal peptide. The 31-residue stretch at 24–54 (ESWDPCVQVVPNTTYQCMDLNLYKIPENIPT) folds into the LRRNT domain. At 24 to 633 (ESWDPCVQVV…FNNATCQISK (610 aa)) the chain is on the extracellular side. Cysteines 29 and 40 form a disulfide. The N-linked (GlcNAc...) asparagine glycan is linked to asparagine 35. LRR repeat units follow at residues 55–76 (STKE…SFSN), 79–100 (ELQV…AYQG), 103–124 (HLST…AFSG), 127–148 (SLQT…PIGH), 151–172 (TLKE…EYFS), 176–197 (NLEH…DLRV), 205–225 (NLSL…AFKE), and 227–247 (KLHK…KSCI). 2 N-linked (GlcNAc...) asparagine glycosylation sites follow: asparagine 189 and asparagine 205. Residues asparagine 282 and asparagine 295 are each glycosylated (N-linked (GlcNAc...) asparagine). LRR repeat units lie at residues 353-374 (SLKR…VKLP), 375-398 (SLEF…ADLK), 401-423 (RLKH…MGLE), 424-445 (QLEH…PVFL), 449-459 (NLRYLDISYTN), 473-496 (SLQV…FREM), 498-519 (NLTT…AFCL), 522-543 (RLRV…PYKP), and 546-569 (SLQI…QHFP). An intrachain disulfide couples cysteine 391 to cysteine 392. N-linked (GlcNAc...) asparagine glycans are attached at residues asparagine 498 and asparagine 527. A glycan (N-linked (GlcNAc...) asparagine) is linked at asparagine 576. The LRRCT domain maps to 580 to 631 (NDFACVCEYQSFLQWVKDQRQLLVEVEHLVCAIPLQMRGMPVLGFNNATCQI). Intrachain disulfides connect cysteine 584/cysteine 610 and cysteine 586/cysteine 629. The N-linked (GlcNAc...) asparagine glycan is linked to asparagine 626. Residues 634–654 (TIVGGSVFSILMVSVIAVLVY) traverse the membrane as a helical segment. Over 655–843 (KFYFHLMLLA…SRQHDAETST (189 aa)) the chain is Cytoplasmic. One can recognise a TIR domain in the interval 674-817 (SIYDAFVIYS…IFWRRLRKAL (144 aa)). Residues 824–843 (SPAGTADAAESRQHDAETST) are disordered. A compositionally biased stretch (basic and acidic residues) spans 832 to 843 (AESRQHDAETST).

This sequence belongs to the Toll-like receptor family. As to quaternary structure, belongs to the lipopolysaccharide (LPS) receptor, a multi-protein complex containing at least CD14, LY96 and TLR4. Binding to bacterial LPS leads to homodimerization. Interacts with LY96 via the extracellular domain. Interacts with MYD88 and TIRAP via their respective TIR domains. Interacts with NOX4. Interacts with CNPY3 and HSP90B1; this interaction is required for proper folding in the endoplasmic reticulum. Interacts with MAP3K21; this interaction leads to negative regulation of TLR4 signaling. Interacts with CD36, following CD36 stimulation by oxLDL or amyloid-beta 42, and forms a heterodimer with TLR6. The trimeric complex is internalized and triggers inflammatory response. LYN kinase activity facilitates TLR4-TLR6 heterodimerization and signal initiation. Interacts with TICAM1 in response to LPS in a WDFY1-dependent manner. Interacts with WDFY1 in response to LPS. Interacts with SMPDL3B. Interacts with CEACAM1; upon lipopolysaccharide stimulation, forms a complex including TLR4 and the phosphorylated form of SYK and CEACAM1, which in turn, recruits PTPN6 that dephosphorylates SYK, reducing the production of reactive oxygen species (ROS) and lysosome disruption, which in turn, reduces the activity of the inflammasome. Interacts with RFTN1; the interaction occurs in response to lipopolysaccharide stimulation. Interacts with SCIMP; the interaction occurs in response to lipopolysaccharide stimulation and is enhanced by phosphorylation of SCIMP by LYN. This interaction facilitates the phosphorylation of TLR4 by LYN which elicits a selective cytokine response in macrophages. Interacts with TRAF3IP3. Interacts with TREM1; this interaction enhances TLR4-mediated inflammatory response. Interacts with ZG16B/PAUF. Interacts with CD82; this interaction inhibits TLR4-mediated signaling pathway. Post-translationally, phosphorylated on tyrosine residues by LYN after binding lipopolysaccharide. Ubiquitinated by RNF128 via 'Lys-28'-linked polyubiquitin chains, leading to proteasomal degradation.

Its subcellular location is the cell membrane. The protein resides in the early endosome. It is found in the cell projection. The protein localises to the ruffle. Its function is as follows. Transmembrane receptor that functions as a pattern recognition receptor recognizing pathogen- and damage-associated molecular patterns (PAMPs and DAMPs) to induce innate immune responses via downstream signaling pathways. At the plasma membrane, cooperates with LY96 to mediate the innate immune response to bacterial lipopolysaccharide (LPS). Also involved in LPS-independent inflammatory responses triggered by free fatty acids, such as palmitate, and Ni(2+). Mechanistically, acts via MYD88, TIRAP and TRAF6, leading to NF-kappa-B activation, cytokine secretion and the inflammatory response. Alternatively, CD14-mediated TLR4 internalization via endocytosis is associated with the initiation of a MYD88-independent signaling via the TICAM1-TBK1-IRF3 axis leading to type I interferon production. In addition to the secretion of proinflammatory cytokines, initiates the activation of NLRP3 inflammasome and formation of a positive feedback loop between autophagy and NF-kappa-B signaling cascade. In complex with TLR6, promotes inflammation in monocytes/macrophages by associating with TLR6 and the receptor CD86. Upon ligand binding, such as oxLDL or amyloid-beta 42, the TLR4:TLR6 complex is internalized and triggers inflammatory response, leading to NF-kappa-B-dependent production of CXCL1, CXCL2 and CCL9 cytokines, via MYD88 signaling pathway, and CCL5 cytokine, via TICAM1 signaling pathway. In myeloid dendritic cells, vesicular stomatitis virus glycoprotein G but not LPS promotes the activation of IRF7, leading to type I IFN production in a CD14-dependent manner. The chain is Toll-like receptor 4 (TLR4) from Equus caballus (Horse).